We begin with the raw amino-acid sequence, 388 residues long: Plasminogen-binding group A streptococcal M-like protein PAM (388 aa).

An N-terminal signal peptide occupies residues 1-29 (RKLKTGTASVAVALTVVGAGLASQTEVKA). The interval 85-113 (VEKLTADAELQRLKNERHEEAELERLKSE) is able to bind plasminogen. The stretch at 91–103 (DAELQRLKNERHE) is one A-1 repeat. The tract at residues 91 to 116 (DAELQRLKNERHEEAELERLKSERHD) is 2 X approximate tandem repeats, type a. Basic and acidic residues-rich tracts occupy residues 95–137 (QRLK…KQEH), 145–168 (INEKEAEAKEKEAEQKKLKEEKQI), 176–189 (LRRDLDASREAKKQ), 218–231 (LRRDLDASREAKKQ), and 260–269 (LRRDLDASRE). Disordered regions lie at residues 95–189 (QRLK…AKKQ), 204–231 (VKEEKQISDASRQGLRRDLDASREAKKQ), and 248–269 (EEKQISDASRQGLRRDLDASRE). One copy of the A-2 repeat lies at 104–116 (EAELERLKSERHD). Residues 147–153 (EKEAEAK) form a B-1 repeat. Residues 147–161 (EKEAEAKEKEAEQKK) form a 2 X tandem repeats, type b region. The stretch at 154-159 (EKEAEQ) is one B-2 repeat. C repeat units lie at residues 160–194 (KKLKEEKQISDASRQGLRRDLDASREAKKQVEKDL), 202–236 (DKVKEEKQISDASRQGLRRDLDASREAKKQVEKGL), and 244–278 (DKVKEEKQISDASRQGLRRDLDASREAKKQVEKAL). D repeat units follow at residues 311-316 (AKLEAE), 317-322 (AKALKE), 325-330 (AKQAEE), and 332-337 (AKLRAE). Basic and acidic residues predominate over residues 331–340 (LAKLRAEKAS). The tract at residues 331–388 (LAKLRAEKASDSQTPDAKPGNKAVPGKGQAPQAGTKPNQNKAPMKETKRQLPSTGETT) is disordered. The LPXTG sorting signal motif lies at 381–385 (LPSTG). T384 carries the post-translational modification Pentaglycyl murein peptidoglycan amidated threonine. The propeptide at 385-388 (GETT) is removed by sortase.

Belongs to the M protein family.

It is found in the secreted. Its subcellular location is the cell wall. In terms of biological role, binds to human plasminogen (and plasmin) via its kringle repeats. Also binds to albumin, immunoglobulin G and fibrinogen. Could provide the bacteria with a mechanism for invasion, as streptococcal-bound plasmin could permit tissue penetration. The chain is Plasminogen-binding group A streptococcal M-like protein PAM (pam) from Streptococcus pyogenes.